Reading from the N-terminus, the 232-residue chain is Ribonuclease 3 (232 aa).

The RNase III domain occupies 5-134 (QTVLKNHFEI…FLGALLLDKD (130 aa)). E47 provides a ligand contact to Mg(2+). D51 is a catalytic residue. The Mg(2+) site is built by D120 and E123. E123 is a catalytic residue. The region spanning 160 to 229 (DYKTHLQELL…AKNAVEKGLD (70 aa)) is the DRBM domain.

Belongs to the ribonuclease III family. As to quaternary structure, homodimer. Mg(2+) is required as a cofactor.

Its subcellular location is the cytoplasm. The enzyme catalyses Endonucleolytic cleavage to 5'-phosphomonoester.. In terms of biological role, digests double-stranded RNA. Involved in the processing of primary rRNA transcript to yield the immediate precursors to the large and small rRNAs (23S and 16S). Processes some mRNAs, and tRNAs when they are encoded in the rRNA operon. Processes pre-crRNA and tracrRNA of type II CRISPR loci if present in the organism. This Streptococcus pneumoniae (strain ATCC BAA-255 / R6) protein is Ribonuclease 3.